We begin with the raw amino-acid sequence, 498 residues long: ATP synthase subunit beta, chloroplastic (498 aa).

172 to 179 (GGAGVGKT) serves as a coordination point for ATP.

The protein belongs to the ATPase alpha/beta chains family. As to quaternary structure, F-type ATPases have 2 components, CF(1) - the catalytic core - and CF(0) - the membrane proton channel. CF(1) has five subunits: alpha(3), beta(3), gamma(1), delta(1), epsilon(1). CF(0) has four main subunits: a(1), b(1), b'(1) and c(9-12).

Its subcellular location is the plastid. It is found in the chloroplast thylakoid membrane. The enzyme catalyses ATP + H2O + 4 H(+)(in) = ADP + phosphate + 5 H(+)(out). In terms of biological role, produces ATP from ADP in the presence of a proton gradient across the membrane. The catalytic sites are hosted primarily by the beta subunits. This Idiospermum australiense (Ribbonwood tree) protein is ATP synthase subunit beta, chloroplastic.